Consider the following 138-residue polypeptide: Transcription antitermination protein NusB (138 aa).

Belongs to the NusB family.

Involved in transcription antitermination. Required for transcription of ribosomal RNA (rRNA) genes. Binds specifically to the boxA antiterminator sequence of the ribosomal RNA (rrn) operons. The protein is Transcription antitermination protein NusB of Blochmanniella floridana.